Consider the following 352-residue polypeptide: 4-hydroxy-2-oxovalerate aldolase (352 aa).

A Pyruvate carboxyltransferase domain is found at 13-265 (VRLTDTSLRD…KTGIDFFDIA (253 aa)). Residue 21–22 (RD) participates in substrate binding. Residue Asp22 participates in Mn(2+) binding. His25 serves as the catalytic Proton acceptor. Substrate-binding residues include Ser175 and His204. Positions 204 and 206 each coordinate Mn(2+). Position 295 (Tyr295) interacts with substrate.

The protein belongs to the 4-hydroxy-2-oxovalerate aldolase family.

The catalysed reaction is (S)-4-hydroxy-2-oxopentanoate = acetaldehyde + pyruvate. The chain is 4-hydroxy-2-oxovalerate aldolase from Mycolicibacterium paratuberculosis (strain ATCC BAA-968 / K-10) (Mycobacterium paratuberculosis).